We begin with the raw amino-acid sequence, 55 residues long: Large ribosomal subunit protein bL33 (55 aa).

The protein belongs to the bacterial ribosomal protein bL33 family.

The chain is Large ribosomal subunit protein bL33 from Baumannia cicadellinicola subsp. Homalodisca coagulata.